The following is a 765-amino-acid chain: Palmitoyltransferase ZDHHC8 (765 aa).

The Cytoplasmic segment spans residues 1 to 13; the sequence is MPRSPGTRLKPAK. Residues 14-34 form a helical membrane-spanning segment; that stretch reads YIPVATAAALLVGSSTLFFVF. Topologically, residues 35–52 are lumenal; that stretch reads TCPWLTRAVSPAVPVYNG. The helical transmembrane segment at 53-73 threads the bilayer; the sequence is IIFLFVLANFSMATFMDPGVF. At 74 to 148 the chain is on the cytoplasmic side; the sequence is PRADEDEDKE…NCIGRRNYRY (75 aa). Positions 104 to 154 constitute a DHHC domain; sequence KWCATCHFYRPPRCSHCSVCDNCVEDFDHHCPWVNNCIGRRNYRYFFLFLL. C134 acts as the S-palmitoyl cysteine intermediate in catalysis. Residues 149–169 form a helical membrane-spanning segment; it reads FFLFLLSLSAHMVGVVAFGLV. At 170-190 the chain is on the lumenal side; sequence YVLNHAEGLGAAHTTITMAVM. Residues 191–211 traverse the membrane as a helical segment; it reads CVAGLFFIPVIGLTGFHVVLV. At 212–765 the chain is on the cytoplasmic side; the sequence is TRGRTTNEHV…VGGTTYEISV (554 aa). The segment at 290 to 386 is disordered; that stretch reads LKAGLGRSKS…PGPDSLTLGE (97 aa). A compositionally biased stretch (basic and acidic residues) spans 301–311; sequence GSLDRLDEKPL. Residues 333 to 348 are compositionally biased toward polar residues; it reads PRPSSAESALSAQRTS. S337 carries the phosphoserine modification. Residue R441 is modified to Omega-N-methylarginine. Residues 447–542 form a disordered region; the sequence is ALQPLRSEGG…PREPSPVRYD (96 aa). A phosphoserine mark is found at S606 and S627. The interval 630-747 is disordered; the sequence is SLSSAVSRAP…PGPSASPARH (118 aa). Positions 639 to 655 are enriched in polar residues; sequence PRTSSSSLQADLANNNA. A compositionally biased stretch (pro residues) spans 671-680; the sequence is QGPPSPPSTP. 4 positions are modified to phosphoserine: S675, S682, S725, and S743.

This sequence belongs to the DHHC palmitoyltransferase family. ERF2/ZDHHC9 subfamily.

It is found in the golgi apparatus membrane. It localises to the mitochondrion membrane. The catalysed reaction is L-cysteinyl-[protein] + hexadecanoyl-CoA = S-hexadecanoyl-L-cysteinyl-[protein] + CoA. In terms of biological role, palmitoyltransferase that catalyzes the addition of palmitate onto various protein substrates and therefore functions in several unrelated biological processes. Through the palmitoylation of ABCA1 regulates the localization of the transporter to the plasma membrane and thereby regulates its function in cholesterol and phospholipid efflux. Could also pamitoylate the D(2) dopamine receptor DRD2 and regulate its stability and localization to the plasma membrane. Could also play a role in glutamatergic transmission. The protein is Palmitoyltransferase ZDHHC8 of Canis lupus familiaris (Dog).